The following is a 136-amino-acid chain: Glutamyl-tRNA(Gln) amidotransferase subunit C, mitochondrial (136 aa).

A mitochondrion-targeting transit peptide spans 1–27 (MWARAVHLGLRAAARGRRGFTSKADPQ).

This sequence belongs to the GatC family. As to quaternary structure, subunit of the heterotrimeric GatCAB amidotransferase (AdT) complex, composed of A (QRSL1), B (GATB) and C (GATC) subunits.

Its subcellular location is the mitochondrion. The enzyme catalyses L-glutamyl-tRNA(Gln) + L-glutamine + ATP + H2O = L-glutaminyl-tRNA(Gln) + L-glutamate + ADP + phosphate + H(+). Its function is as follows. Allows the formation of correctly charged Gln-tRNA(Gln) through the transamidation of misacylated Glu-tRNA(Gln) in the mitochondria. The reaction takes place in the presence of glutamine and ATP through an activated gamma-phospho-Glu-tRNA(Gln). This Bos taurus (Bovine) protein is Glutamyl-tRNA(Gln) amidotransferase subunit C, mitochondrial.